A 569-amino-acid polypeptide reads, in one-letter code: Sulfite reductase [NADPH] hemoprotein beta-component (569 aa).

Residues Cys-433, Cys-439, Cys-478, and Cys-482 each contribute to the [4Fe-4S] cluster site. Residue Cys-482 coordinates siroheme.

Belongs to the nitrite and sulfite reductase 4Fe-4S domain family. In terms of assembly, alpha(8)-beta(8). The alpha component is a flavoprotein, the beta component is a hemoprotein. Requires siroheme as cofactor. It depends on [4Fe-4S] cluster as a cofactor.

It carries out the reaction hydrogen sulfide + 3 NADP(+) + 3 H2O = sulfite + 3 NADPH + 4 H(+). Its pathway is sulfur metabolism; hydrogen sulfide biosynthesis; hydrogen sulfide from sulfite (NADPH route): step 1/1. Component of the sulfite reductase complex that catalyzes the 6-electron reduction of sulfite to sulfide. This is one of several activities required for the biosynthesis of L-cysteine from sulfate. The chain is Sulfite reductase [NADPH] hemoprotein beta-component from Shewanella sediminis (strain HAW-EB3).